The sequence spans 248 residues: 2,3-bisphosphoglycerate-dependent phosphoglycerate mutase (248 aa).

Residues 9-16, 22-23, R61, 88-91, K99, 115-116, and 183-184 contribute to the substrate site; these read RHGHSEWN, TG, ERHY, RR, and GN. The active-site Tele-phosphohistidine intermediate is H10. E88 acts as the Proton donor/acceptor in catalysis.

It belongs to the phosphoglycerate mutase family. BPG-dependent PGAM subfamily.

It catalyses the reaction (2R)-2-phosphoglycerate = (2R)-3-phosphoglycerate. It functions in the pathway carbohydrate degradation; glycolysis; pyruvate from D-glyceraldehyde 3-phosphate: step 3/5. Functionally, catalyzes the interconversion of 2-phosphoglycerate and 3-phosphoglycerate. The protein is 2,3-bisphosphoglycerate-dependent phosphoglycerate mutase of Arthrobacter sp. (strain FB24).